The sequence spans 388 residues: Succinate--CoA ligase [ADP-forming] subunit beta (388 aa).

Positions 9-244 (KQLFARYGLP…QSQEDPREAQ (236 aa)) constitute an ATP-grasp domain. ATP is bound by residues Lys46, 53–55 (GRG), Glu99, Thr102, and Glu107. Residues Asn199 and Asp213 each coordinate Mg(2+). Residues Asn264 and 321–323 (GIV) each bind substrate.

This sequence belongs to the succinate/malate CoA ligase beta subunit family. In terms of assembly, heterotetramer of two alpha and two beta subunits. The cofactor is Mg(2+).

The catalysed reaction is succinate + ATP + CoA = succinyl-CoA + ADP + phosphate. It carries out the reaction GTP + succinate + CoA = succinyl-CoA + GDP + phosphate. It participates in carbohydrate metabolism; tricarboxylic acid cycle; succinate from succinyl-CoA (ligase route): step 1/1. In terms of biological role, succinyl-CoA synthetase functions in the citric acid cycle (TCA), coupling the hydrolysis of succinyl-CoA to the synthesis of either ATP or GTP and thus represents the only step of substrate-level phosphorylation in the TCA. The beta subunit provides nucleotide specificity of the enzyme and binds the substrate succinate, while the binding sites for coenzyme A and phosphate are found in the alpha subunit. This is Succinate--CoA ligase [ADP-forming] subunit beta from Klebsiella pneumoniae (strain 342).